We begin with the raw amino-acid sequence, 397 residues long: Bifunctional enzyme IspD/IspF (397 aa).

Residues 1-236 (MSIAAIILAA…LKGMQIFPDI (236 aa)) are 2-C-methyl-D-erythritol 4-phosphate cytidylyltransferase. Positions 237–397 (RTGNGYDVHS…TVIYPGEIPK (161 aa)) are 2-C-methyl-D-erythritol 2,4-cyclodiphosphate synthase. 2 residues coordinate a divalent metal cation: D243 and H245. Residues 243-245 (DVH) and 269-270 (HS) contribute to the 4-CDP-2-C-methyl-D-erythritol 2-phosphate site. An a divalent metal cation-binding site is contributed by H277. 4-CDP-2-C-methyl-D-erythritol 2-phosphate-binding positions include 291–293 (DIG), 367–370 (TTNE), F374, and R377.

The protein in the N-terminal section; belongs to the IspD/TarI cytidylyltransferase family. IspD subfamily. In the C-terminal section; belongs to the IspF family. A divalent metal cation serves as cofactor.

It carries out the reaction 2-C-methyl-D-erythritol 4-phosphate + CTP + H(+) = 4-CDP-2-C-methyl-D-erythritol + diphosphate. It catalyses the reaction 4-CDP-2-C-methyl-D-erythritol 2-phosphate = 2-C-methyl-D-erythritol 2,4-cyclic diphosphate + CMP. It participates in isoprenoid biosynthesis; isopentenyl diphosphate biosynthesis via DXP pathway; isopentenyl diphosphate from 1-deoxy-D-xylulose 5-phosphate: step 2/6. It functions in the pathway isoprenoid biosynthesis; isopentenyl diphosphate biosynthesis via DXP pathway; isopentenyl diphosphate from 1-deoxy-D-xylulose 5-phosphate: step 4/6. Bifunctional enzyme that catalyzes the formation of 4-diphosphocytidyl-2-C-methyl-D-erythritol from CTP and 2-C-methyl-D-erythritol 4-phosphate (MEP) (IspD), and catalyzes the conversion of 4-diphosphocytidyl-2-C-methyl-D-erythritol 2-phosphate (CDP-ME2P) to 2-C-methyl-D-erythritol 2,4-cyclodiphosphate (ME-CPP) with a corresponding release of cytidine 5-monophosphate (CMP) (IspF). This Bartonella bacilliformis (strain ATCC 35685 / KC583 / Herrer 020/F12,63) protein is Bifunctional enzyme IspD/IspF.